The sequence spans 71 residues: Large ribosomal subunit protein bL31 (71 aa).

Residues Cys-16, Cys-18, Cys-38, and Cys-41 each coordinate Zn(2+).

This sequence belongs to the bacterial ribosomal protein bL31 family. Type A subfamily. Part of the 50S ribosomal subunit. Zn(2+) is required as a cofactor.

In terms of biological role, binds the 23S rRNA. This Neisseria meningitidis serogroup A / serotype 4A (strain DSM 15465 / Z2491) protein is Large ribosomal subunit protein bL31.